We begin with the raw amino-acid sequence, 438 residues long: Protein c-ets-1-A (438 aa).

Residues 49–134 (ATFSRFTKEQ…EHLEILQKDS (86 aa)) enclose the PNT domain. Residues 128 to 240 (EILQKDSKQY…DNMCLGRISR (113 aa)) are activation domain; required for transcription activation. A helix HI-1 region spans residues 301 to 309 (FKDYVRDRA). The helix HI-2 stretch occupies residues 320–327 (AAALAGYT). The segment at residues 332-412 (IQLWQFLLEL…AGKRYVYRFV (81 aa)) is a DNA-binding region (ETS). The tract at residues 415 to 419 (LQSLL) is helix H4. The helix H5 stretch occupies residues 423–429 (PEELHAM).

Belongs to the ETS family. Binds DNA as a homodimer; homodimerization is required for transcription activation.

It is found in the nucleus. The protein localises to the cytoplasm. Its activity is regulated as follows. Autoinhibited by a module composed of four alpha helices (HI-1, HI-2, H4, and H5) that flank the DNA-binding ETS domain, reducing the affinity for DNA. Functionally, transcription factor. Directly controls the expression of cytokine and chemokine genes in a wide variety of different cellular contexts. The chain is Protein c-ets-1-A (ets1-a) from Xenopus laevis (African clawed frog).